Here is a 766-residue protein sequence, read N- to C-terminus: MSEEETVSAPAPASTPAPAGTDVGSGGAAAGIANAGAEGGDGAEDVKKHGSKMLVGPRPPQNAIFIHKLYQILEDESLHDLIWWTPSGLSFMIKPVERFSKALATYFKHTNITSFVRQLNIYGFHKVSHDHSSNDANSGDDANTNDDSNTHDDNSGNKNSSGDENTGGGVQEKEKSNPTKIWEFKHSSGIFKKGDIEGLKHIKRRASSRNNSSINSRKNSSNQNYDIDSGARVRPSSIQDPSTSSNSFGNFVPQIPGANNSIPEYFNNSHVTYENANHAPLESNNPEMQEQNRPPNFQDETLKHLKEINFDMVKIIESMQHFISLQHSFCSQSFTFKNVSKKKSENIVKDHQKQLQAFESDMLTFKQHVMSRAHRTIDSLCAVNAAATAASVAPAPAPTSTSAYAPKSQYEMMVPPGNQYVPQKSSSTTNIPSRFNTASVPPSQLFVQYQPQSQQHVTYAKQPAHVPNFINQPIPIQQLPPQYADTFSTPQMMHNPFASKNNNKPGNTKRTNSVLMDPLTPAASVGVQGPLNYPIMNINPSVRDYNKPVPQNMAPSPIYPINEPTTRLYSQPKMRSLGSTSSLPNDRRNSPLKLTPRSSLNEDSLYPKPRNSLKSSISGTSLSSSFTLVANNPAPIRYSQQGLLRSLNKAANCAPDSVTPLDSSVLTGPPPKNMDNLPAVSSNLINSPMNVEHSSSLSQAEPAPQIELPQPSLPTTSTTKNTGEADNSKRKGSGVYSLLNQEDSSTSSADPKTEDKAAPALKKVKM.

Disordered regions lie at residues Met1 to Lys52, His129 to Ile181, Lys203 to Ser247, Lys547 to Gly619, and Ser657 to Met766. Composition is skewed to low complexity over residues Ser8 to Ala19 and Asn134 to Asp147. Residues Ile64–His186 mediate DNA binding. The span at Gln171–Ile181 shows a compositional bias: basic and acidic residues. Residues Ser208–Asn224 show a composition bias toward low complexity. Ser220 is subject to Phosphoserine. Polar residues predominate over residues Ser236–Ser247. The residue at position 556 (Ser556) is a Phosphoserine. Positions Ala679–Gln699 are enriched in polar residues. Residues Leu708–Thr719 are compositionally biased toward low complexity. Ser733 carries the phosphoserine modification. The segment covering Leu738–Asp750 has biased composition (polar residues).

The protein in the N-terminal section; belongs to the HSF family.

Its subcellular location is the nucleus. Functionally, involved in cell surface assembly and regulation of the gene related to flocculation (asexual cell aggregation). Mutations in SFL1 causes constitutive cell aggregation. This is Flocculation suppression protein (SFL1) from Saccharomyces cerevisiae (strain ATCC 204508 / S288c) (Baker's yeast).